Reading from the N-terminus, the 100-residue chain is MIYDNRLLKVICAPHVSEKTSAVMEKNNILVLKVDKKATKAAIKQAILQLFEVKVKEIHTIIVKGKTKRHGKRIGFRSNWKKAYITLYEGQNFTLINGAK.

This sequence belongs to the universal ribosomal protein uL23 family. Part of the 50S ribosomal subunit. Contacts protein L29, and trigger factor when it is bound to the ribosome.

In terms of biological role, one of the early assembly proteins it binds 23S rRNA. One of the proteins that surrounds the polypeptide exit tunnel on the outside of the ribosome. Forms the main docking site for trigger factor binding to the ribosome. The polypeptide is Large ribosomal subunit protein uL23 (Baumannia cicadellinicola subsp. Homalodisca coagulata).